A 140-amino-acid chain; its full sequence is NADH-quinone oxidoreductase subunit I (140 aa).

4Fe-4S ferredoxin-type domains follow at residues 42–71 (GSFT…VGSI) and 81–110 (ASYE…FNQE). Cys51, Cys54, Cys57, Cys61, Cys90, Cys93, Cys96, and Cys100 together coordinate [4Fe-4S] cluster.

The protein belongs to the complex I 23 kDa subunit family. In terms of assembly, NDH-1 is composed of 14 different subunits. Subunits NuoA, H, J, K, L, M, N constitute the membrane sector of the complex. [4Fe-4S] cluster serves as cofactor.

It localises to the cell membrane. It carries out the reaction a quinone + NADH + 5 H(+)(in) = a quinol + NAD(+) + 4 H(+)(out). In terms of biological role, NDH-1 shuttles electrons from NADH, via FMN and iron-sulfur (Fe-S) centers, to quinones in the respiratory chain. The immediate electron acceptor for the enzyme in this species is believed to be ubiquinone. Couples the redox reaction to proton translocation (for every two electrons transferred, four hydrogen ions are translocated across the cytoplasmic membrane), and thus conserves the redox energy in a proton gradient. The protein is NADH-quinone oxidoreductase subunit I of Carboxydothermus hydrogenoformans (strain ATCC BAA-161 / DSM 6008 / Z-2901).